Here is a 315-residue protein sequence, read N- to C-terminus: Methionyl-tRNA formyltransferase (315 aa).

A (6S)-5,6,7,8-tetrahydrofolate-binding site is contributed by 107-110 (SLLP).

This sequence belongs to the Fmt family.

It carries out the reaction L-methionyl-tRNA(fMet) + (6R)-10-formyltetrahydrofolate = N-formyl-L-methionyl-tRNA(fMet) + (6S)-5,6,7,8-tetrahydrofolate + H(+). Attaches a formyl group to the free amino group of methionyl-tRNA(fMet). The formyl group appears to play a dual role in the initiator identity of N-formylmethionyl-tRNA by promoting its recognition by IF2 and preventing the misappropriation of this tRNA by the elongation apparatus. The chain is Methionyl-tRNA formyltransferase from Borreliella afzelii (strain PKo) (Borrelia afzelii).